A 68-amino-acid polypeptide reads, in one-letter code: uncharacterized protein (68 aa).

An N-terminal signal peptide occupies residues 1–15; that stretch reads MTIIFLICLDASTQS. The tract at residues 14–68 is disordered; that stretch reads QSTTNNSINNNNNNNNNNNNNNNNNNNNNNNNNNNNNNNNNNNNNNSKVFDFNIF. N-linked (GlcNAc...) asparagine glycans are attached at residues asparagine 18 and asparagine 58. Positions 22–59 are enriched in low complexity; the sequence is NNNNNNNNNNNNNNNNNNNNNNNNNNNNNNNNNNNNNN.

The protein resides in the secreted. This is an uncharacterized protein from Dictyostelium discoideum (Social amoeba).